Here is a 508-residue protein sequence, read N- to C-terminus: UTP--glucose-1-phosphate uridylyltransferase (508 aa).

The residue at position 13 (Ser13) is a Phosphoserine. UTP contacts are provided by residues 113–116 (LNGG), Lys127, Gln190, and Gly222. Residue 115–116 (GG) coordinates substrate. Position 127 (Lys127) interacts with Mg(2+). Substrate contacts are provided by residues His223 and 251–253 (NID). Asp253 and Lys396 together coordinate UTP. Asp253 provides a ligand contact to Mg(2+). Lys396 is an active-site residue. Thr426 is modified (phosphothreonine). Position 434 is a phosphoserine (Ser434). Lys438 carries the post-translational modification N6-acetyllysine. Residues Ser448 and Ser461 each carry the phosphoserine modification. Positions 457–508 (HLTVSGDVTFGKNVSLKGTVIIIANHGDRIDIPPGAVLENKIVSGNLRILDH) are oligomerization. A critical for end-to-end subunit interaction region spans residues 502-503 (NL).

It belongs to the UDPGP type 1 family. In terms of assembly, homooctamer.

The protein localises to the cytoplasm. It catalyses the reaction alpha-D-glucose 1-phosphate + UTP + H(+) = UDP-alpha-D-glucose + diphosphate. It functions in the pathway glycan biosynthesis; glycogen biosynthesis. Functionally, UTP--glucose-1-phosphate uridylyltransferase catalyzing the conversion of glucose-1-phosphate into UDP-glucose, a crucial precursor for the production of glycogen. This is UTP--glucose-1-phosphate uridylyltransferase (Ugp2) from Mus musculus (Mouse).